The sequence spans 1342 residues: DNA-directed RNA polymerase subunit beta (1342 aa).

It belongs to the RNA polymerase beta chain family. As to quaternary structure, the RNAP catalytic core consists of 2 alpha, 1 beta, 1 beta' and 1 omega subunit. When a sigma factor is associated with the core the holoenzyme is formed, which can initiate transcription.

The catalysed reaction is RNA(n) + a ribonucleoside 5'-triphosphate = RNA(n+1) + diphosphate. DNA-dependent RNA polymerase catalyzes the transcription of DNA into RNA using the four ribonucleoside triphosphates as substrates. This chain is DNA-directed RNA polymerase subunit beta, found in Blochmanniella floridana.